Here is a 505-residue protein sequence, read N- to C-terminus: ADP-ribosylarginine hydrolase CG2909 (505 aa).

ADP-D-ribose contacts are provided by arginine 198, glycine 336, glycine 338, glycine 340, valine 341, tryptophan 342, tryptophan 377, aspartate 432, asparagine 439, glutamate 440, glycine 450, and aspartate 451.

It carries out the reaction N(omega)-(ADP-D-ribosyl)-L-arginyl-[protein] + H2O = ADP-D-ribose + L-arginyl-[protein]. It catalyses the reaction N(omega)-(ADP-D-ribosyl)-L-arginine + H2O = ADP-D-ribose + L-arginine. Functionally, protein ADP-ribosyl hydrolase that specifically removes mono-ADP-ribosyl modifications from protein arginine residues. This chain is ADP-ribosylarginine hydrolase CG2909, found in Drosophila melanogaster (Fruit fly).